The primary structure comprises 1088 residues: RNA-directed RNA polymerase (1088 aa).

The region spanning 501–687 is the RdRp catalytic domain; that stretch reads LSYGDVTRFL…AKRYIAGGKI (187 aa).

The protein belongs to the reoviridae RNA-directed RNA polymerase family. In terms of assembly, interacts with VP3 (Potential). Interacts with VP2; this interaction activates VP1. Interacts with NSP5; this interaction is probably necessary for the formation of functional virus factories. Interacts with NSP2; this interaction is weak. The cofactor is Mg(2+).

It is found in the virion. It carries out the reaction RNA(n) + a ribonucleoside 5'-triphosphate = RNA(n+1) + diphosphate. RNA-directed RNA polymerase that is involved in both transcription and genome replication. Together with VP3 capping enzyme, forms an enzyme complex positioned near the channels situated at each of the five-fold vertices of the core. Following infection, the outermost layer of the virus is lost, leaving a double-layered particle (DLP) made up of the core and VP6 shell. VP1 then catalyzes the transcription of fully conservative plus-strand genomic RNAs that are extruded through the DLP's channels into the cytoplasm where they function as mRNAs for translation of viral proteins. One copy of each of the viral (+)RNAs is also recruited during core assembly, together with newly synthesized polymerase complexes and VP2. The polymerase of these novo-formed particles catalyzes the synthesis of complementary minus-strands leading to dsRNA formation. To do so, the polymerase specifically recognizes and binds 4 bases 5'-UGUG-3' in the conserved 3'-sequence of plus-strand RNA templates. VP2 presumably activates the autoinhibited VP1-RNA complex to coordinate packaging and genome replication. Once dsRNA synthesis is complete, the polymerase switches to the transcriptional mode, thus providing secondary transcription. This is RNA-directed RNA polymerase from Rotavirus A (strain RVA/Cow/United States/NCDV-Lincoln/1969/G6P6[1]) (RV-A).